A 276-amino-acid chain; its full sequence is SKA complex subunit 1 homolog (276 aa).

Positions 48–78 (VDVSLTAMEAQLQAVRRRLQEEREAFPKAKK) form a coiled coil.

The protein belongs to the SKA1 family.

This chain is SKA complex subunit 1 homolog, found in Oryza sativa subsp. japonica (Rice).